A 273-amino-acid polypeptide reads, in one-letter code: 4-hydroxy-tetrahydrodipicolinate reductase (273 aa).

NAD(+) is bound by residues 11 to 16 (GAGGRM) and Glu36. An NADP(+)-binding site is contributed by Arg37. Residues 100-102 (GTT) and 124-127 (AANY) each bind NAD(+). His157 acts as the Proton donor/acceptor in catalysis. His158 contributes to the (S)-2,3,4,5-tetrahydrodipicolinate binding site. Lys161 acts as the Proton donor in catalysis. 167 to 168 (GT) contacts (S)-2,3,4,5-tetrahydrodipicolinate.

The protein belongs to the DapB family.

Its subcellular location is the cytoplasm. The enzyme catalyses (S)-2,3,4,5-tetrahydrodipicolinate + NAD(+) + H2O = (2S,4S)-4-hydroxy-2,3,4,5-tetrahydrodipicolinate + NADH + H(+). It carries out the reaction (S)-2,3,4,5-tetrahydrodipicolinate + NADP(+) + H2O = (2S,4S)-4-hydroxy-2,3,4,5-tetrahydrodipicolinate + NADPH + H(+). The protein operates within amino-acid biosynthesis; L-lysine biosynthesis via DAP pathway; (S)-tetrahydrodipicolinate from L-aspartate: step 4/4. In terms of biological role, catalyzes the conversion of 4-hydroxy-tetrahydrodipicolinate (HTPA) to tetrahydrodipicolinate. The polypeptide is 4-hydroxy-tetrahydrodipicolinate reductase (Acinetobacter baylyi (strain ATCC 33305 / BD413 / ADP1)).